Reading from the N-terminus, the 113-residue chain is Replication initiation control protein YabA (113 aa).

Positions 86, 88, 102, and 105 each coordinate Zn(2+).

This sequence belongs to the YabA family. Homotetramer. Interacts with both DnaA and DnaN, acting as a bridge between these two proteins. The cofactor is Zn(2+).

Its subcellular location is the cytoplasm. It localises to the nucleoid. Involved in control of chromosome replication initiation. Inhibits the cooperative binding of DnaA to the oriC region, thus negatively regulating initiation of chromosome replication. Inhibits the ability of DnaA-ATP to form a helix on DNA; does not disassemble preformed DnaA-DNA helices. Decreases the residence time of DnaA on the chromosome at its binding sites (oriC, replication forks and promoter-binding sites). Tethers DnaA to the replication machinery via the DNA polymerase beta sliding clamp subunit (dnaN). Associates with oriC and other DnaA targets on the chromosome in a DnaA-dependent manner. The polypeptide is Replication initiation control protein YabA (Pediococcus pentosaceus (strain ATCC 25745 / CCUG 21536 / LMG 10740 / 183-1w)).